A 351-amino-acid chain; its full sequence is UDP-N-acetylglucosamine--N-acetylmuramyl-(pentapeptide) pyrophosphoryl-undecaprenol N-acetylglucosamine transferase (351 aa).

UDP-N-acetyl-alpha-D-glucosamine is bound by residues 12–14 (TGG), Asn-124, Arg-160, Ser-188, Ile-239, 258–263 (ALTVCE), and Gln-283.

The protein belongs to the glycosyltransferase 28 family. MurG subfamily.

The protein resides in the cell inner membrane. The catalysed reaction is di-trans,octa-cis-undecaprenyl diphospho-N-acetyl-alpha-D-muramoyl-L-alanyl-D-glutamyl-meso-2,6-diaminopimeloyl-D-alanyl-D-alanine + UDP-N-acetyl-alpha-D-glucosamine = di-trans,octa-cis-undecaprenyl diphospho-[N-acetyl-alpha-D-glucosaminyl-(1-&gt;4)]-N-acetyl-alpha-D-muramoyl-L-alanyl-D-glutamyl-meso-2,6-diaminopimeloyl-D-alanyl-D-alanine + UDP + H(+). It functions in the pathway cell wall biogenesis; peptidoglycan biosynthesis. Functionally, cell wall formation. Catalyzes the transfer of a GlcNAc subunit on undecaprenyl-pyrophosphoryl-MurNAc-pentapeptide (lipid intermediate I) to form undecaprenyl-pyrophosphoryl-MurNAc-(pentapeptide)GlcNAc (lipid intermediate II). This is UDP-N-acetylglucosamine--N-acetylmuramyl-(pentapeptide) pyrophosphoryl-undecaprenol N-acetylglucosamine transferase from Actinobacillus pleuropneumoniae serotype 7 (strain AP76).